The chain runs to 334 residues: Ornithine carbamoyltransferase (334 aa).

Carbamoyl phosphate contacts are provided by residues 57–60 (STRT), glutamine 84, arginine 108, and 135–138 (HPTQ). L-ornithine is bound by residues asparagine 169, aspartate 233, and 237 to 238 (SM). Carbamoyl phosphate-binding positions include 275 to 276 (CL) and arginine 320.

Belongs to the aspartate/ornithine carbamoyltransferase superfamily. OTCase family.

It localises to the cytoplasm. It catalyses the reaction carbamoyl phosphate + L-ornithine = L-citrulline + phosphate + H(+). It participates in amino-acid biosynthesis; L-arginine biosynthesis; L-arginine from L-ornithine and carbamoyl phosphate: step 1/3. Reversibly catalyzes the transfer of the carbamoyl group from carbamoyl phosphate (CP) to the N(epsilon) atom of ornithine (ORN) to produce L-citrulline. The sequence is that of Ornithine carbamoyltransferase from Aeromonas hydrophila subsp. hydrophila (strain ATCC 7966 / DSM 30187 / BCRC 13018 / CCUG 14551 / JCM 1027 / KCTC 2358 / NCIMB 9240 / NCTC 8049).